The sequence spans 242 residues: Fibrinolytic enzyme, isozyme C (242 aa).

Residues 1–242 (VIGGTNASPG…YLGWIGDNSR (242 aa)) form the Peptidase S1 domain. A disulfide bond links C29 and C45. Active-site charge relay system residues include H44 and D93. 3 disulfide bridges follow: C127-C197, C158-C176, and C187-C219. The Charge relay system role is filled by S191.

This sequence belongs to the peptidase S1 family.

This chain is Fibrinolytic enzyme, isozyme C, found in Lumbricus rubellus (Humus earthworm).